A 198-amino-acid polypeptide reads, in one-letter code: Recombination protein RecR (198 aa).

The C4-type zinc finger occupies 57–72; it reads CEKCNTFTEAQICEVC. The 96-residue stretch at 80–175 folds into the Toprim domain; it reads TLLCVVETPA…AVTRLARGVP (96 aa).

The protein belongs to the RecR family.

May play a role in DNA repair. It seems to be involved in an RecBC-independent recombinational process of DNA repair. It may act with RecF and RecO. This chain is Recombination protein RecR, found in Paraburkholderia phytofirmans (strain DSM 17436 / LMG 22146 / PsJN) (Burkholderia phytofirmans).